A 498-amino-acid polypeptide reads, in one-letter code: Glycerol kinase (498 aa).

Position 14 (threonine 14) interacts with ADP. Residues threonine 14, threonine 15, and serine 16 each coordinate ATP. Threonine 14 lines the sn-glycerol 3-phosphate pocket. Arginine 18 contacts ADP. The sn-glycerol 3-phosphate site is built by arginine 84, glutamate 85, and tyrosine 136. Glycerol is bound by residues arginine 84, glutamate 85, and tyrosine 136. Residue histidine 232 is modified to Phosphohistidine; by HPr. Aspartate 246 is a sn-glycerol 3-phosphate binding site. Residues aspartate 246 and glutamine 247 each contribute to the glycerol site. Residues threonine 268 and glycine 311 each coordinate ADP. The ATP site is built by threonine 268, glycine 311, glutamine 315, and glycine 412. Residues glycine 412 and asparagine 416 each contribute to the ADP site.

Belongs to the FGGY kinase family. Homotetramer and homodimer (in equilibrium). Post-translationally, the phosphoenolpyruvate-dependent sugar phosphotransferase system (PTS), including enzyme I, and histidine-containing protein (HPr) are required for the phosphorylation, which leads to the activation of the enzyme.

It catalyses the reaction glycerol + ATP = sn-glycerol 3-phosphate + ADP + H(+). The protein operates within polyol metabolism; glycerol degradation via glycerol kinase pathway; sn-glycerol 3-phosphate from glycerol: step 1/1. Activated by phosphorylation and inhibited by fructose 1,6-bisphosphate (FBP). Its function is as follows. Key enzyme in the regulation of glycerol uptake and metabolism. Catalyzes the phosphorylation of glycerol to yield sn-glycerol 3-phosphate. This chain is Glycerol kinase, found in Lactococcus lactis subsp. lactis (strain IL1403) (Streptococcus lactis).